The sequence spans 448 residues: Deoxyguanosinetriphosphate triphosphohydrolase-like protein (448 aa).

The 194-residue stretch at 67-260 (RLTHSLEVSQ…MELADDIAYG (194 aa)) folds into the HD domain.

It belongs to the dGTPase family. Type 2 subfamily.

The polypeptide is Deoxyguanosinetriphosphate triphosphohydrolase-like protein (Aliivibrio fischeri (strain ATCC 700601 / ES114) (Vibrio fischeri)).